The chain runs to 223 residues: Ras-related protein Rab-37 (223 aa).

A compositionally biased stretch (low complexity) spans 1-13 (MTGTPGAATAGDG). The disordered stretch occupies residues 1 to 22 (MTGTPGAATAGDGEAPERSPPF). N-acetylthreonine is present on threonine 2. Residues serine 38, glycine 39, valine 40, glycine 41, lysine 42, threonine 43, cysteine 44, and threonine 62 each contribute to the GTP site. Mg(2+) is bound at residue threonine 43. 2 short sequence motifs (switch) span residues 52–67 (GAFL…GIDS) and 85–102 (DTAG…YYRD). Mg(2+) contacts are provided by threonine 62 and aspartate 85. GTP contacts are provided by glycine 88, asparagine 143, lysine 144, aspartate 146, serine 173, alanine 174, and lysine 175. 2 S-geranylgeranyl cysteine lipidation sites follow: cysteine 219 and cysteine 220. Cysteine 220 is subject to Cysteine methyl ester. The propeptide at 221–223 (SFV) is removed in mature form.

Belongs to the small GTPase superfamily. Rab family. In terms of assembly, interacts with RIMS1. Interacts (in GDP-bound form) with RPGR, RPGR functions as guanine exchange factor (GEF). Mg(2+) serves as cofactor. Expressed in the retina (at protein level). Specifically expressed in the bone marrow mast cells.

It localises to the cytoplasmic vesicle. The protein localises to the cell projection. Its subcellular location is the cilium. The enzyme catalyses GTP + H2O = GDP + phosphate + H(+). Regulated by guanine nucleotide exchange factors (GEFs) including RPGR which promote the exchange of bound GDP for free GTP. Regulated by GTPase activating proteins (GAPs) which increase the GTP hydrolysis activity. Inhibited by GDP dissociation inhibitors (GDIs). Functionally, the small GTPases Rab are key regulators of intracellular membrane trafficking, from the formation of transport vesicles to their fusion with membranes. Rabs cycle between an inactive GDP-bound form and an active GTP-bound form that is able to recruit to membranes different sets of downstream effectors directly responsible for vesicle formation, movement, tethering and fusion. Acts as an organizer for autophagosome biogenesis in a GTP-dependent manner. Involved in retinal homeostasis by autophagy regulation. This Mus musculus (Mouse) protein is Ras-related protein Rab-37.